A 945-amino-acid polypeptide reads, in one-letter code: Alanine--tRNA ligase (945 aa).

Residues His564, His568, Cys666, and His670 each coordinate Zn(2+). The segment at 911–945 (SGGGRPDMAQAGGKDASKLPEALQQARETMTEKLG) is disordered.

The protein belongs to the class-II aminoacyl-tRNA synthetase family. It depends on Zn(2+) as a cofactor.

It localises to the cytoplasm. The enzyme catalyses tRNA(Ala) + L-alanine + ATP = L-alanyl-tRNA(Ala) + AMP + diphosphate. Functionally, catalyzes the attachment of alanine to tRNA(Ala) in a two-step reaction: alanine is first activated by ATP to form Ala-AMP and then transferred to the acceptor end of tRNA(Ala). Also edits incorrectly charged Ser-tRNA(Ala) and Gly-tRNA(Ala) via its editing domain. The polypeptide is Alanine--tRNA ligase (Rhodopirellula baltica (strain DSM 10527 / NCIMB 13988 / SH1)).